Here is a 518-residue protein sequence, read N- to C-terminus: Bifunctional purine biosynthesis protein PurH (518 aa).

The MGS-like domain maps to M1 to T146.

It belongs to the PurH family.

The catalysed reaction is (6R)-10-formyltetrahydrofolate + 5-amino-1-(5-phospho-beta-D-ribosyl)imidazole-4-carboxamide = 5-formamido-1-(5-phospho-D-ribosyl)imidazole-4-carboxamide + (6S)-5,6,7,8-tetrahydrofolate. The enzyme catalyses IMP + H2O = 5-formamido-1-(5-phospho-D-ribosyl)imidazole-4-carboxamide. The protein operates within purine metabolism; IMP biosynthesis via de novo pathway; 5-formamido-1-(5-phospho-D-ribosyl)imidazole-4-carboxamide from 5-amino-1-(5-phospho-D-ribosyl)imidazole-4-carboxamide (10-formyl THF route): step 1/1. It participates in purine metabolism; IMP biosynthesis via de novo pathway; IMP from 5-formamido-1-(5-phospho-D-ribosyl)imidazole-4-carboxamide: step 1/1. The protein is Bifunctional purine biosynthesis protein PurH of Prochlorococcus marinus (strain NATL1A).